A 363-amino-acid chain; its full sequence is Flagellar P-ring protein 2 (363 aa).

The N-terminal stretch at 1 to 20 is a signal peptide; the sequence is MKLRTCCISLMLLLALPLQA.

The protein belongs to the FlgI family. The basal body constitutes a major portion of the flagellar organelle and consists of four rings (L,P,S, and M) mounted on a central rod.

Its subcellular location is the periplasm. The protein resides in the bacterial flagellum basal body. Functionally, assembles around the rod to form the L-ring and probably protects the motor/basal body from shearing forces during rotation. In Photobacterium profundum (strain SS9), this protein is Flagellar P-ring protein 2.